The following is a 190-amino-acid chain: Selenoprotein S (190 aa).

The chain crosses the membrane as a helical span at residues 28 to 48 (SLLASYGWYILFSCILLYIVI). Residues 78-90 (RQEALAAARLRMQ) are VCP/p97-interacting motif (VIM). The segment at 115–190 (KIEMWDSMQE…RRGPSSGGUN (76 aa)) is disordered. Residues 160–174 (RGGGYNPLTGEGGGT) are compositionally biased toward gly residues. Position 189 (selenocysteine 189) is a non-standard amino acid, selenocysteine.

This sequence belongs to the selenoprotein S family. In terms of assembly, interacts with DERL1 and (via VIM motif) with VCP, suggesting that it forms a membrane complex with DERL1 that serves as a receptor for VCP. Also interacts with DERL2, DERL3 and SELENOK. The SELENOK-SELENOS complex interacts with VCP. Interacts with CCDC47. In terms of processing, truncated SELENOS proteins produced by failed UGA/Sec decoding are ubiquitinated by the CRL2(KLHDC2) and CRL2(KLHDC3) complexes, which recognizes the glycine (Gly) at the C-terminus of truncated SELENOS proteins. Truncated SELENOS proteins produced by failed UGA/Sec decoding are also ubiquitinated by the CRL5(KLHDC1) complex.

It is found in the endoplasmic reticulum membrane. It localises to the cytoplasm. In terms of biological role, involved in the degradation process of misfolded endoplasmic reticulum (ER) luminal proteins. Participates in the transfer of misfolded proteins from the ER to the cytosol, where they are destroyed by the proteasome in a ubiquitin-dependent manner. Probably acts by serving as a linker between DERL1, which mediates the retrotranslocation of misfolded proteins into the cytosol, and the ATPase complex VCP, which mediates the translocation and ubiquitination. This Mus musculus (Mouse) protein is Selenoprotein S.